A 427-amino-acid polypeptide reads, in one-letter code: Tyrosine--tRNA ligase (427 aa).

Tyr39 serves as a coordination point for L-tyrosine. The 'HIGH' region motif lies at 44-53; sequence PTSDSLHIGH. Residues Tyr178 and Gln182 each coordinate L-tyrosine. The 'KMSKS' region signature appears at 238-242; sequence KFGKT. Lys241 serves as a coordination point for ATP. Residues 360-417 form the S4 RNA-binding domain; it reads ITLQQALVESKLVVSRAQARELISSNSITVNSKKQLKTEYIFCATDRLYNRFTLLRRG.

Belongs to the class-I aminoacyl-tRNA synthetase family. TyrS type 1 subfamily. Homodimer.

It is found in the cytoplasm. It catalyses the reaction tRNA(Tyr) + L-tyrosine + ATP = L-tyrosyl-tRNA(Tyr) + AMP + diphosphate + H(+). In terms of biological role, catalyzes the attachment of tyrosine to tRNA(Tyr) in a two-step reaction: tyrosine is first activated by ATP to form Tyr-AMP and then transferred to the acceptor end of tRNA(Tyr). This is Tyrosine--tRNA ligase from Blochmanniella pennsylvanica (strain BPEN).